Here is a 160-residue protein sequence, read N- to C-terminus: Small ribosomal subunit protein uS9 (160 aa).

Belongs to the universal ribosomal protein uS9 family.

The sequence is that of Small ribosomal subunit protein uS9 from Cereibacter sphaeroides (strain ATCC 17029 / ATH 2.4.9) (Rhodobacter sphaeroides).